Here is a 316-residue protein sequence, read N- to C-terminus: CRISPR-associated endonuclease Cas1 (316 aa).

3 residues coordinate Mn(2+): Glu-143, His-206, and Glu-221.

This sequence belongs to the CRISPR-associated endonuclease Cas1 family. As to quaternary structure, homodimer, forms a heterotetramer with a Cas2 homodimer. Mg(2+) is required as a cofactor. It depends on Mn(2+) as a cofactor.

Functionally, CRISPR (clustered regularly interspaced short palindromic repeat), is an adaptive immune system that provides protection against mobile genetic elements (viruses, transposable elements and conjugative plasmids). CRISPR clusters contain spacers, sequences complementary to antecedent mobile elements, and target invading nucleic acids. CRISPR clusters are transcribed and processed into CRISPR RNA (crRNA). Acts as a dsDNA endonuclease. Involved in the integration of spacer DNA into the CRISPR cassette. The polypeptide is CRISPR-associated endonuclease Cas1 (Aquifex aeolicus (strain VF5)).